Consider the following 122-residue polypeptide: UPF0102 protein BQ09720 (122 aa).

Belongs to the UPF0102 family.

This Bartonella quintana (strain Toulouse) (Rochalimaea quintana) protein is UPF0102 protein BQ09720.